Reading from the N-terminus, the 125-residue chain is Small ribosomal subunit protein uS13 (125 aa).

It belongs to the universal ribosomal protein uS13 family. As to quaternary structure, part of the 30S ribosomal subunit. Forms a loose heterodimer with protein S19. Forms two bridges to the 50S subunit in the 70S ribosome.

Functionally, located at the top of the head of the 30S subunit, it contacts several helices of the 16S rRNA. In the 70S ribosome it contacts the 23S rRNA (bridge B1a) and protein L5 of the 50S subunit (bridge B1b), connecting the 2 subunits; these bridges are implicated in subunit movement. Contacts the tRNAs in the A and P-sites. The polypeptide is Small ribosomal subunit protein uS13 (Orientia tsutsugamushi (strain Boryong) (Rickettsia tsutsugamushi)).